We begin with the raw amino-acid sequence, 149 residues long: Transcriptional repressor NrdR (149 aa).

The segment at 3-34 is a zinc-finger region; the sequence is CPFCAAVDTKVIDSRLVSDGSQVRRRRQCLDC. The ATP-cone domain maps to 49-139; that stretch reads PRVIKSDEVR…VYRSFEDVRE (91 aa).

Belongs to the NrdR family. Zn(2+) serves as cofactor.

Its function is as follows. Negatively regulates transcription of bacterial ribonucleotide reductase nrd genes and operons by binding to NrdR-boxes. The polypeptide is Transcriptional repressor NrdR (Yersinia pseudotuberculosis serotype O:1b (strain IP 31758)).